We begin with the raw amino-acid sequence, 357 residues long: F-box only protein 25 (357 aa).

Residues 1–83 (MPFLGQDWRS…DTAAHSFYRE (83 aa)) are interaction with beta-actin. The F-box domain maps to 225 to 273 (LTLSDLPLHMLNNILYRFSDGWDIVTLGQVTPTLYMLSEDRRLWKRLCQ).

Part of a SCF (SKP1-cullin-F-box) protein ligase complex consisting of FBXO25, SKP1, CUL1 and RBX1. Interacts directly with SKP1 and CUL1. Interacts (via C-terminus) with beta-actin (via N-terminus). As to expression, expressed in all tissues tested, except striated muscle (at protein level). Expressed predominantly in the cerebral cortex, the hippocampus and the Purkinje cell layer of the brain. Intestine and kidney show also significant levels.

The protein localises to the nucleus. The protein operates within protein modification; protein ubiquitination. Its function is as follows. Substrate-recognition component of the SCF (SKP1-CUL1-F-box protein)-type E3 ubiquitin ligase complex. May play a role in accumulation of expanded polyglutamine (polyQ) protein huntingtin (HTT). The polypeptide is F-box only protein 25 (Fbxo25) (Mus musculus (Mouse)).